The primary structure comprises 237 residues: Uridylate kinase (237 aa).

Position 13–16 (Lys-13–Gly-16) interacts with ATP. Position 53 (Gly-53) interacts with UMP. Residues Gly-54 and Arg-58 each coordinate ATP. Residues Asp-73 and Ala-134 to Thr-141 each bind UMP. Residues Asn-162, Tyr-168, and Asp-171 each contribute to the ATP site.

The protein belongs to the UMP kinase family. As to quaternary structure, homohexamer.

It is found in the cytoplasm. The enzyme catalyses UMP + ATP = UDP + ADP. The protein operates within pyrimidine metabolism; CTP biosynthesis via de novo pathway; UDP from UMP (UMPK route): step 1/1. Its activity is regulated as follows. Inhibited by UTP. Catalyzes the reversible phosphorylation of UMP to UDP. This chain is Uridylate kinase, found in Leifsonia xyli subsp. xyli (strain CTCB07).